The primary structure comprises 480 residues: UDP-N-acetylmuramoyl-L-alanyl-D-glutamate--2,6-diaminopimelate ligase (480 aa).

Ser-21 is a UDP-N-acetyl-alpha-D-muramoyl-L-alanyl-D-glutamate binding site. Position 98 to 104 (98 to 104 (GTNGKSS)) interacts with ATP. UDP-N-acetyl-alpha-D-muramoyl-L-alanyl-D-glutamate contacts are provided by residues 144 to 145 (TT), Ser-171, Gln-177, and Arg-179. At Lys-211 the chain carries N6-carboxylysine. Residues Arg-372, 396 to 399 (DNPR), Gly-446, and Glu-450 each bind meso-2,6-diaminopimelate. A Meso-diaminopimelate recognition motif motif is present at residues 396–399 (DNPR).

The protein belongs to the MurCDEF family. MurE subfamily. Mg(2+) serves as cofactor. Carboxylation is probably crucial for Mg(2+) binding and, consequently, for the gamma-phosphate positioning of ATP.

It is found in the cytoplasm. It catalyses the reaction UDP-N-acetyl-alpha-D-muramoyl-L-alanyl-D-glutamate + meso-2,6-diaminopimelate + ATP = UDP-N-acetyl-alpha-D-muramoyl-L-alanyl-gamma-D-glutamyl-meso-2,6-diaminopimelate + ADP + phosphate + H(+). Its pathway is cell wall biogenesis; peptidoglycan biosynthesis. Its function is as follows. Catalyzes the addition of meso-diaminopimelic acid to the nucleotide precursor UDP-N-acetylmuramoyl-L-alanyl-D-glutamate (UMAG) in the biosynthesis of bacterial cell-wall peptidoglycan. The chain is UDP-N-acetylmuramoyl-L-alanyl-D-glutamate--2,6-diaminopimelate ligase from Rickettsia prowazekii (strain Madrid E).